A 366-amino-acid chain; its full sequence is MRVLAAMSGGVDSAVAAARAVEAGHEVVGVHLALSRLPGTLHTGSRGCCTIEDSMDAQRAANVIGIPYYVWDFSERFALDVVDDFIAEYSAGRTPNPCMRCNEKIKFAALLEKALDLGFDAVCTGHYASIVTDADGNRELHRASAWAKDQSYVLGVLTADQLAHSMFPLGVTPSKAEVRAEAAARGLTVAAKPDSHDICFIPDGDTRGWLAERVGAETGDILDRSGARIGTHEGAHAYTVGQRKGLNIGFPSPDGRPRFVLEVRPKDNTVVVGPKEALDIAEIAGARYTWAGTPPASPDTPFACEVQIRAHADPVPAVARVAGGELVIRPDAPLNGVAPGQTAVVYAGTRVLGQTTIDRAVSAVPV.

Residues 6-13 and leucine 32 each bind ATP; that span reads AMSGGVDS. Cysteine 101 (nucleophile) is an active-site residue. Cysteines 101 and 199 form a disulfide. Glycine 125 contributes to the ATP binding site. An interaction with tRNA region spans residues 148 to 150; the sequence is KDQ. Cysteine 199 acts as the Cysteine persulfide intermediate in catalysis.

Belongs to the MnmA/TRMU family.

The protein resides in the cytoplasm. The catalysed reaction is S-sulfanyl-L-cysteinyl-[protein] + uridine(34) in tRNA + AH2 + ATP = 2-thiouridine(34) in tRNA + L-cysteinyl-[protein] + A + AMP + diphosphate + H(+). Catalyzes the 2-thiolation of uridine at the wobble position (U34) of tRNA, leading to the formation of s(2)U34. This is tRNA-specific 2-thiouridylase MnmA from Leifsonia xyli subsp. xyli (strain CTCB07).